Here is a 309-residue protein sequence, read N- to C-terminus: Cytochrome c biogenesis protein CcsA (309 aa).

8 consecutive transmembrane segments (helical) span residues 18–38 (LGLLVFYFLLINLPISLGAVF), 48–68 (LITILVNLLITLQLLFRWSIS), 73–93 (ISNLYESLYFLTWGITLGQLL), 102–122 (IIPSIAIPIELLTVAFACFVL), 148–168 (VMLSYAALIIGSLLSMSVLFI), 216–236 (SILVGFVLLTLGLISGAVWAN), 250–267 (TWAFISWLFYAAYLHMRI), and 279–299 (LASTGFLVVLVCYLGVNFLGI).

The protein belongs to the CcmF/CycK/Ccl1/NrfE/CcsA family. As to quaternary structure, may interact with ccs1.

It is found in the cellular thylakoid membrane. Its function is as follows. Required during biogenesis of c-type cytochromes (cytochrome c6 and cytochrome f) at the step of heme attachment. This Prochlorococcus marinus (strain AS9601) protein is Cytochrome c biogenesis protein CcsA.